We begin with the raw amino-acid sequence, 444 residues long: Bystin (444 aa).

Disordered regions lie at residues 1 to 37 (MAKK…HQKQ) and 53 to 85 (ALAQ…TAGE). The span at 24 to 34 (SRKRSKVPKTH) shows a compositional bias: basic residues. Low complexity predominate over residues 73 to 84 (AAFAVAGAATAG).

It belongs to the bystin family. In terms of assembly, component of the 40S pre-ribosome. Highly expressed in flowers and at lower levels in roots, hypocotyls, stems, leaves, siliques and seeds.

It is found in the nucleus. Its subcellular location is the nucleolus. The protein localises to the nucleoplasm. In terms of biological role, essential protein required during embryogenesis and pollen development. Required for processing of 20S pre-rRNA precursor and biogenesis of 40S ribosomal subunits. This is Bystin from Arabidopsis thaliana (Mouse-ear cress).